The primary structure comprises 290 residues: Probable septum site-determining protein MinC (290 aa).

This sequence belongs to the MinC family. As to quaternary structure, interacts with MinD and FtsZ.

Cell division inhibitor that blocks the formation of polar Z ring septums. Rapidly oscillates between the poles of the cell to destabilize FtsZ filaments that have formed before they mature into polar Z rings. Prevents FtsZ polymerization. In Heliobacterium modesticaldum (strain ATCC 51547 / Ice1), this protein is Probable septum site-determining protein MinC.